Reading from the N-terminus, the 102-residue chain is Large ribosomal subunit protein mL63 (102 aa).

The protein belongs to the mitochondrion-specific ribosomal protein mL63 family.

It is found in the mitochondrion. The sequence is that of Large ribosomal subunit protein mL63 (Mrpl57) from Mus musculus (Mouse).